The sequence spans 414 residues: Glucose-1-phosphate adenylyltransferase (414 aa).

Alpha-D-glucose 1-phosphate contacts are provided by residues Tyr99, Gly164, 181–182, and Ser199; that span reads EK.

This sequence belongs to the bacterial/plant glucose-1-phosphate adenylyltransferase family. In terms of assembly, homotetramer.

The enzyme catalyses alpha-D-glucose 1-phosphate + ATP + H(+) = ADP-alpha-D-glucose + diphosphate. The protein operates within glycan biosynthesis; glycogen biosynthesis. Involved in the biosynthesis of ADP-glucose, a building block required for the elongation reactions to produce glycogen. Catalyzes the reaction between ATP and alpha-D-glucose 1-phosphate (G1P) to produce pyrophosphate and ADP-Glc. This is Glucose-1-phosphate adenylyltransferase from Bifidobacterium longum (strain DJO10A).